The sequence spans 20 residues: Non-specific lipid-transfer protein-like protein (20 aa).

This sequence belongs to the plant LTP family.

This chain is Non-specific lipid-transfer protein-like protein, found in Jatropha curcas (Barbados nut).